A 612-amino-acid polypeptide reads, in one-letter code: 1-deoxy-D-xylulose-5-phosphate synthase (612 aa).

Residues His77 and 118-120 each bind thiamine diphosphate; that span reads GHS. Asp147 is a binding site for Mg(2+). Residues 148-149, Asn176, Tyr288, and Glu365 each bind thiamine diphosphate; that span reads AA. Asn176 contacts Mg(2+).

This sequence belongs to the transketolase family. DXPS subfamily. Homodimer. Mg(2+) serves as cofactor. The cofactor is thiamine diphosphate.

The enzyme catalyses D-glyceraldehyde 3-phosphate + pyruvate + H(+) = 1-deoxy-D-xylulose 5-phosphate + CO2. Its pathway is metabolic intermediate biosynthesis; 1-deoxy-D-xylulose 5-phosphate biosynthesis; 1-deoxy-D-xylulose 5-phosphate from D-glyceraldehyde 3-phosphate and pyruvate: step 1/1. Functionally, catalyzes the acyloin condensation reaction between C atoms 2 and 3 of pyruvate and glyceraldehyde 3-phosphate to yield 1-deoxy-D-xylulose-5-phosphate (DXP). This Malacoplasma penetrans (strain HF-2) (Mycoplasma penetrans) protein is 1-deoxy-D-xylulose-5-phosphate synthase.